The following is a 147-amino-acid chain: Phosphoribosyl-AMP cyclohydrolase (147 aa).

Residue aspartate 89 participates in Mg(2+) binding. Cysteine 90 is a Zn(2+) binding site. Mg(2+) is bound by residues aspartate 91 and aspartate 93. 2 residues coordinate Zn(2+): cysteine 106 and cysteine 113.

Belongs to the PRA-CH family. In terms of assembly, homodimer. The cofactor is Mg(2+). Zn(2+) serves as cofactor.

It is found in the cytoplasm. The enzyme catalyses 1-(5-phospho-beta-D-ribosyl)-5'-AMP + H2O = 1-(5-phospho-beta-D-ribosyl)-5-[(5-phospho-beta-D-ribosylamino)methylideneamino]imidazole-4-carboxamide. Its pathway is amino-acid biosynthesis; L-histidine biosynthesis; L-histidine from 5-phospho-alpha-D-ribose 1-diphosphate: step 3/9. Catalyzes the hydrolysis of the adenine ring of phosphoribosyl-AMP. This chain is Phosphoribosyl-AMP cyclohydrolase, found in Nitrobacter hamburgensis (strain DSM 10229 / NCIMB 13809 / X14).